We begin with the raw amino-acid sequence, 634 residues long: Kelch-like protein 31 (634 aa).

Position 2 is a n,N,N-trimethylalanine (Ala2). The BTB domain maps to 73–137; the sequence is CDLVIGTKTK…AYTGKLTLSL (65 aa). The region spanning 172 to 273 is the BACK domain; sequence CMYVVNIAET…SAQDLVNYVQ (102 aa). 6 Kelch repeats span residues 317–365, 366–419, 420–466, 468–513, 515–565, and 567–614; these read VLVT…VMDG, FLYV…VFNG, LVYA…VADG, VLVT…TLSD, VYVM…ALHG, and AYLV…TLSM.

N-terminus is methylated by METTL11A/NTM1. As to expression, strongly expressed in skeletal muscle and weakly in heart. According to PubMed:15302408, not expressed in other tissues. According to PubMed:18719355, abundantly expressed in both embryonic skeletal and heart tissues.

Its function is as follows. Transcriptional repressor in MAPK/JNK signaling pathway to regulate cellular functions. Overexpression inhibits the transcriptional activities of both the TPA-response element (TRE) and serum response element (SRE). This Homo sapiens (Human) protein is Kelch-like protein 31 (KLHL31).